Reading from the N-terminus, the 233-residue chain is Large ribosomal subunit protein bL19c (233 aa).

The transit peptide at 1-77 (MASKVLPQAL…FPARNSFVVR (77 aa)) directs the protein to the chloroplast.

In terms of assembly, component of the chloroplast large ribosomal subunit (LSU). Mature 70S chloroplast ribosomes of higher plants consist of a small (30S) and a large (50S) subunit. The 30S small subunit contains 1 molecule of ribosomal RNA (16S rRNA) and 24 different proteins. The 50S large subunit contains 3 rRNA molecules (23S, 5S and 4.5S rRNA) and 33 different proteins.

Its subcellular location is the plastid. The protein resides in the chloroplast. Its function is as follows. Component of the chloroplast ribosome (chloro-ribosome), a dedicated translation machinery responsible for the synthesis of chloroplast genome-encoded proteins, including proteins of the transcription and translation machinery and components of the photosynthetic apparatus. The polypeptide is Large ribosomal subunit protein bL19c (RPL19) (Spinacia oleracea (Spinach)).